The sequence spans 313 residues: Ribose-phosphate pyrophosphokinase (313 aa).

ATP contacts are provided by residues 37–39 (DGE) and 96–97 (RQ). 2 residues coordinate Mg(2+): H131 and D170. K193 is an active-site residue. D-ribose 5-phosphate contacts are provided by residues R195, D219, and 223–227 (DTAGT).

This sequence belongs to the ribose-phosphate pyrophosphokinase family. Class I subfamily. In terms of assembly, homohexamer. It depends on Mg(2+) as a cofactor.

The protein localises to the cytoplasm. It carries out the reaction D-ribose 5-phosphate + ATP = 5-phospho-alpha-D-ribose 1-diphosphate + AMP + H(+). It functions in the pathway metabolic intermediate biosynthesis; 5-phospho-alpha-D-ribose 1-diphosphate biosynthesis; 5-phospho-alpha-D-ribose 1-diphosphate from D-ribose 5-phosphate (route I): step 1/1. Its function is as follows. Involved in the biosynthesis of the central metabolite phospho-alpha-D-ribosyl-1-pyrophosphate (PRPP) via the transfer of pyrophosphoryl group from ATP to 1-hydroxyl of ribose-5-phosphate (Rib-5-P). This Pseudomonas aeruginosa (strain ATCC 15692 / DSM 22644 / CIP 104116 / JCM 14847 / LMG 12228 / 1C / PRS 101 / PAO1) protein is Ribose-phosphate pyrophosphokinase.